The following is a 235-amino-acid chain: Secretory carrier-associated membrane protein 5B (235 aa).

Residues 1-39 are Cytoplasmic-facing; the sequence is MSDKPNNFPPLPRFIPLKPCFYQDFDTDIPDVHRTTAKR. Residues 40-60 form a helical membrane-spanning segment; the sequence is LYYLWMLNSITLGVNLIGCLA. Residues 61–67 lie on the Extracellular side of the membrane; sequence WLIGGGG. A helical membrane pass occupies residues 68–88; that stretch reads ATNFGLAFLWLILFTPCSYVC. Residues 89–102 lie on the Cytoplasmic side of the membrane; sequence WFRPIYKAFKTDSS. The chain crosses the membrane as a helical span at residues 103–125; sequence FNFMAFFFTFTGQLVISIIQAVG. The Extracellular portion of the chain corresponds to 126–148; sequence IPGWGVCGWIASISFFGTNVGSA. Residues 149–169 traverse the membrane as a helical segment; that stretch reads VVMLIPTIMFTAVAVLSFVAL. Residues 170–235 are Cytoplasmic-facing; that stretch reads TKVHRFYRGA…TPNYGYSNQM (66 aa).

Belongs to the SCAMP family. SCAMP5 subfamily.

Its subcellular location is the cell membrane. It localises to the golgi apparatus membrane. The protein resides in the golgi apparatus. The protein localises to the trans-Golgi network membrane. It is found in the recycling endosome membrane. Its subcellular location is the cytoplasmic vesicle. It localises to the secretory vesicle. The protein resides in the synaptic vesicle membrane. In terms of biological role, required for the calcium-dependent exocytosis of signal sequence-containing cytokines. Probably acts in cooperation with the SNARE machinery. This Xenopus laevis (African clawed frog) protein is Secretory carrier-associated membrane protein 5B (scamp5-b).